Here is a 437-residue protein sequence, read N- to C-terminus: Ribosomal protein uS12 methylthiotransferase RimO (437 aa).

An MTTase N-terminal domain is found at 9–125; it reads PAIFLLSLGC…VLAAIGAHYC (117 aa). [4Fe-4S] cluster-binding residues include Cys-18, Cys-54, Cys-88, Cys-149, Cys-153, and Cys-156. The 230-residue stretch at 135-364 folds into the Radical SAM core domain; it reads LTPPHYAFLK…MELQESIAAS (230 aa). The 68-residue stretch at 367 to 434 folds into the TRAM domain; it reads RKLEGQTLTV…AYELFGRVGS (68 aa).

The protein belongs to the methylthiotransferase family. RimO subfamily. Requires [4Fe-4S] cluster as cofactor.

The protein resides in the cytoplasm. The catalysed reaction is L-aspartate(89)-[ribosomal protein uS12]-hydrogen + (sulfur carrier)-SH + AH2 + 2 S-adenosyl-L-methionine = 3-methylsulfanyl-L-aspartate(89)-[ribosomal protein uS12]-hydrogen + (sulfur carrier)-H + 5'-deoxyadenosine + L-methionine + A + S-adenosyl-L-homocysteine + 2 H(+). In terms of biological role, catalyzes the methylthiolation of an aspartic acid residue of ribosomal protein uS12. The chain is Ribosomal protein uS12 methylthiotransferase RimO from Chlorobaculum parvum (strain DSM 263 / NCIMB 8327) (Chlorobium vibrioforme subsp. thiosulfatophilum).